Here is a 133-residue protein sequence, read N- to C-terminus: Large-conductance mechanosensitive channel (133 aa).

Transmembrane regions (helical) follow at residues Phe8–Gly28, Ile30–Ile50, and Gly73–Ile93.

The protein belongs to the MscL family. In terms of assembly, homopentamer.

It localises to the cell membrane. In terms of biological role, channel that opens in response to stretch forces in the membrane lipid bilayer. May participate in the regulation of osmotic pressure changes within the cell. This is Large-conductance mechanosensitive channel from Hathewaya histolytica (Clostridium histolyticum).